The primary structure comprises 374 residues: Queuine tRNA-ribosyltransferase (374 aa).

The Proton acceptor role is filled by D91. Substrate contacts are provided by residues D91 to Y95, D145, Q189, and G216. An RNA binding region spans residues G247–D253. The active-site Nucleophile is D266. The tract at residues T271–R275 is RNA binding; important for wobble base 34 recognition. Residues C304, C306, C309, and H335 each coordinate Zn(2+).

The protein belongs to the queuine tRNA-ribosyltransferase family. As to quaternary structure, homodimer. Within each dimer, one monomer is responsible for RNA recognition and catalysis, while the other monomer binds to the replacement base PreQ1. It depends on Zn(2+) as a cofactor.

The enzyme catalyses 7-aminomethyl-7-carbaguanine + guanosine(34) in tRNA = 7-aminomethyl-7-carbaguanosine(34) in tRNA + guanine. It functions in the pathway tRNA modification; tRNA-queuosine biosynthesis. Functionally, catalyzes the base-exchange of a guanine (G) residue with the queuine precursor 7-aminomethyl-7-deazaguanine (PreQ1) at position 34 (anticodon wobble position) in tRNAs with GU(N) anticodons (tRNA-Asp, -Asn, -His and -Tyr). Catalysis occurs through a double-displacement mechanism. The nucleophile active site attacks the C1' of nucleotide 34 to detach the guanine base from the RNA, forming a covalent enzyme-RNA intermediate. The proton acceptor active site deprotonates the incoming PreQ1, allowing a nucleophilic attack on the C1' of the ribose to form the product. After dissociation, two additional enzymatic reactions on the tRNA convert PreQ1 to queuine (Q), resulting in the hypermodified nucleoside queuosine (7-(((4,5-cis-dihydroxy-2-cyclopenten-1-yl)amino)methyl)-7-deazaguanosine). The sequence is that of Queuine tRNA-ribosyltransferase from Leptospira interrogans serogroup Icterohaemorrhagiae serovar Lai (strain 56601).